A 192-amino-acid polypeptide reads, in one-letter code: MNTIWIAVGALALLGLVFGAILGYASRRFAVEDDPVVEKIDAILPQSQCGQCGYPGCRPYAEAVGLQGEKINRCAPGGEAVMLKIAELLNVEPQPCDGEEQQAAPVRMLAVIDENNCIGCTKCIQACPVDAIVGATRAMHTVMSDLCTGCNLCVDPCPTHCIELRPVNETPDSWKWDLNTIPVRIIPVEQHA.

The interval 1–26 is hydrophobic; sequence MNTIWIAVGALALLGLVFGAILGYAS. The 4Fe-4S domain occupies 32 to 91; that stretch reads EDDPVVEKIDAILPQSQCGQCGYPGCRPYAEAVGLQGEKINRCAPGGEAVMLKIAELLNV. C49, C52, C57, C74, C117, C120, C123, C127, C147, C150, C153, and C157 together coordinate [4Fe-4S] cluster. 4Fe-4S ferredoxin-type domains are found at residues 108 to 137 and 138 to 167; these read MLAV…GATR and AMHT…LRPV.

The protein belongs to the 4Fe4S bacterial-type ferredoxin family. RnfB subfamily. The complex is composed of six subunits: RsxA, RsxB, RsxC, RsxD, RsxE and RsxG. [4Fe-4S] cluster serves as cofactor.

Its subcellular location is the cell inner membrane. Part of a membrane-bound complex that couples electron transfer with translocation of ions across the membrane. Required to maintain the reduced state of SoxR. The protein is Ion-translocating oxidoreductase complex subunit B of Salmonella newport (strain SL254).